A 387-amino-acid chain; its full sequence is [LysW]-aminoadipate semialdehyde/glutamate semialdehyde transaminase (387 aa).

Residues Gly96–Thr97 and Phe123 contribute to the pyridoxal 5'-phosphate site. Residue Arg126 participates in substrate binding. Asp207–Gln210 lines the pyridoxal 5'-phosphate pocket. Lys236 bears the N6-(pyridoxal phosphate)lysine mark. Substrate is bound at residue Ser264. Thr265 serves as a coordination point for pyridoxal 5'-phosphate.

This sequence belongs to the class-III pyridoxal-phosphate-dependent aminotransferase family. LysJ subfamily. As to quaternary structure, homodimer. Requires pyridoxal 5'-phosphate as cofactor.

The protein resides in the cytoplasm. It catalyses the reaction [amino-group carrier protein]-C-terminal-gamma-(L-lysyl)-L-glutamate + 2-oxoglutarate = [amino-group carrier protein]-C-terminal-N-(1-carboxy-5-oxopentan-1-yl)-L-glutamine + L-glutamate. The enzyme catalyses [amino-group carrier protein]-C-terminal-gamma-(L-ornithyl)-L-glutamate + 2-oxoglutarate = [amino-group carrier protein]-C-terminal-gamma-(L-glutamyl-5-semialdehyde)-L-glutamate + L-glutamate. The protein operates within amino-acid biosynthesis; L-lysine biosynthesis via AAA pathway; L-lysine from L-alpha-aminoadipate (Thermus route): step 4/5. It functions in the pathway amino-acid biosynthesis; L-arginine biosynthesis. Functionally, involved in both the arginine and lysine biosynthetic pathways. In Sulfurisphaera tokodaii (strain DSM 16993 / JCM 10545 / NBRC 100140 / 7) (Sulfolobus tokodaii), this protein is [LysW]-aminoadipate semialdehyde/glutamate semialdehyde transaminase.